A 730-amino-acid chain; its full sequence is Catalase-peroxidase (730 aa).

A compositionally biased stretch (basic and acidic residues) spans 1 to 11 (MDAKTDDKDAG). An N-terminal signal peptide occupies residues 1-21 (MDAKTDDKDAGKCPFSSGSHA). The interval 1–24 (MDAKTDDKDAGKCPFSSGSHAHRN) is disordered. The segment at residues 96–218 (WHSAGTYRIS…LGAVQMGLIY (123 aa)) is a cross-link (tryptophyl-tyrosyl-methioninium (Trp-Tyr) (with M-244)). Histidine 97 serves as the catalytic Proton acceptor. The tryptophyl-tyrosyl-methioninium (Tyr-Met) (with W-96) cross-link spans 218–244 (YVNPEGPNGNPDPVGSAKDIRETFYRM). Position 259 (histidine 259) interacts with heme b.

This sequence belongs to the peroxidase family. Peroxidase/catalase subfamily. In terms of assembly, homodimer or homotetramer. Requires heme b as cofactor. In terms of processing, formation of the three residue Trp-Tyr-Met cross-link is important for the catalase, but not the peroxidase activity of the enzyme.

The enzyme catalyses H2O2 + AH2 = A + 2 H2O. The catalysed reaction is 2 H2O2 = O2 + 2 H2O. Functionally, bifunctional enzyme with both catalase and broad-spectrum peroxidase activity. In Rhodopseudomonas palustris (strain BisA53), this protein is Catalase-peroxidase.